The sequence spans 299 residues: Class II hydrophobin C (299 aa).

The N-terminal stretch at 1-17 (MKFLTVAAAIFASTSLA) is a signal peptide. Residues Asn39, Asn78, and Asn91 are each glycosylated (N-linked (GlcNAc...) asparagine). 4 disulfide bridges follow: Cys232–Cys281, Cys242–Cys272, Cys243–Cys255, and Cys282–Cys293.

Belongs to the cerato-ulmin hydrophobin family.

It localises to the secreted. The protein localises to the cell wall. The protein resides in the vacuole. It is found in the cytoplasmic vesicle. Functionally, aerial growth, conidiation, and dispersal of filamentous fungi in the environment rely upon a capability of their secreting small amphipathic proteins called hydrophobins (HPBs) with low sequence identity. Class I can self-assemble into an outermost layer of rodlet bundles on aerial cell surfaces, conferring cellular hydrophobicity that supports fungal growth, development and dispersal; whereas Class II form highly ordered films at water-air interfaces through intermolecular interactions but contribute nothing to the rodlet structure. Hyd2C contributes to certain cell wall-related features, such as hydrophobicity but is not involved in cell wall-related events during fungal proliferation in host hemocoel. Does not contribute to conidial hydrophobicity. Involved actively in the asexual development. This Beauveria bassiana (strain ARSEF 2860) (White muscardine disease fungus) protein is Class II hydrophobin C.